The sequence spans 275 residues: Large ribosomal subunit protein uL2 (275 aa).

2 disordered regions span residues 24–47 (IHKGSPHASLLESQSKTGGRNHHG) and 227–261 (PVDHPHGGGEAKSGQGNPHPVTPWGVPTKGYKTRK).

It belongs to the universal ribosomal protein uL2 family. Part of the 50S ribosomal subunit. Forms a bridge to the 30S subunit in the 70S ribosome.

In terms of biological role, one of the primary rRNA binding proteins. Required for association of the 30S and 50S subunits to form the 70S ribosome, for tRNA binding and peptide bond formation. It has been suggested to have peptidyltransferase activity; this is somewhat controversial. Makes several contacts with the 16S rRNA in the 70S ribosome. The polypeptide is Large ribosomal subunit protein uL2 (Xylella fastidiosa (strain M12)).